The sequence spans 265 residues: MRRILVTNDDGIYAPGLRAAVRSVEDLGEVIAVAPSGQRSGVGRSVSVFEPLRMAEVNLDGKKAYAVSGTPTDSVILGIFVVMNGELPDLAVSGINVGENISTDTVTTSGTIGAAIEAASYGVPAIAASIQVADQGDKFDNNHSVEYKFDTAMNLLRRVASRVLERGMPVGVDILNINLPLNATEDTEIVVTRLARKIFKTAVEERRDPRGRPYYWIGGDLICSEREGTDVRAVYQEGKISVTPLTIDSTAKVDFGEIMDLLEVI.

Residues Asp9, Asp10, Ser40, and Asn96 each coordinate a divalent metal cation.

It belongs to the SurE nucleotidase family. A divalent metal cation serves as cofactor.

Its subcellular location is the cytoplasm. It catalyses the reaction a ribonucleoside 5'-phosphate + H2O = a ribonucleoside + phosphate. Nucleotidase that shows phosphatase activity on nucleoside 5'-monophosphates. The sequence is that of 5'-nucleotidase SurE from Methanothrix thermoacetophila (strain DSM 6194 / JCM 14653 / NBRC 101360 / PT) (Methanosaeta thermophila).